The chain runs to 368 residues: tRNA 2-selenouridine synthase (368 aa).

The 124-residue stretch at 15–138 folds into the Rhodanese domain; it reads FLNQHPIMDV…LRQYLIGVIE (124 aa). Residue Cys98 is the S-selanylcysteine intermediate of the active site.

The protein belongs to the SelU family. In terms of assembly, monomer.

The enzyme catalyses 5-methylaminomethyl-2-thiouridine(34) in tRNA + selenophosphate + (2E)-geranyl diphosphate + H2O + H(+) = 5-methylaminomethyl-2-selenouridine(34) in tRNA + (2E)-thiogeraniol + phosphate + diphosphate. It catalyses the reaction 5-methylaminomethyl-2-thiouridine(34) in tRNA + (2E)-geranyl diphosphate = 5-methylaminomethyl-S-(2E)-geranyl-thiouridine(34) in tRNA + diphosphate. The catalysed reaction is 5-methylaminomethyl-S-(2E)-geranyl-thiouridine(34) in tRNA + selenophosphate + H(+) = 5-methylaminomethyl-2-(Se-phospho)selenouridine(34) in tRNA + (2E)-thiogeraniol. It carries out the reaction 5-methylaminomethyl-2-(Se-phospho)selenouridine(34) in tRNA + H2O = 5-methylaminomethyl-2-selenouridine(34) in tRNA + phosphate. Functionally, involved in the post-transcriptional modification of the uridine at the wobble position (U34) of tRNA(Lys), tRNA(Glu) and tRNA(Gln). Catalyzes the conversion of 2-thiouridine (S2U-RNA) to 2-selenouridine (Se2U-RNA). Acts in a two-step process involving geranylation of 2-thiouridine (S2U) to S-geranyl-2-thiouridine (geS2U) and subsequent selenation of the latter derivative to 2-selenouridine (Se2U) in the tRNA chain. The polypeptide is tRNA 2-selenouridine synthase (Shewanella baltica (strain OS223)).